The sequence spans 177 residues: Adenine phosphoribosyltransferase (177 aa).

This sequence belongs to the purine/pyrimidine phosphoribosyltransferase family. As to quaternary structure, homodimer.

Its subcellular location is the cytoplasm. The enzyme catalyses AMP + diphosphate = 5-phospho-alpha-D-ribose 1-diphosphate + adenine. The protein operates within purine metabolism; AMP biosynthesis via salvage pathway; AMP from adenine: step 1/1. Functionally, catalyzes a salvage reaction resulting in the formation of AMP, that is energically less costly than de novo synthesis. This Chlorobium phaeovibrioides (strain DSM 265 / 1930) (Prosthecochloris vibrioformis (strain DSM 265)) protein is Adenine phosphoribosyltransferase.